A 318-amino-acid polypeptide reads, in one-letter code: UPF0725 protein At3g44770 (318 aa).

This sequence belongs to the UPF0725 (EMB2204) family.

The chain is UPF0725 protein At3g44770 from Arabidopsis thaliana (Mouse-ear cress).